Consider the following 310-residue polypeptide: Putative integrase/recombinase y4rE (310 aa).

The region spanning 6–83 is the Core-binding (CB) domain; the sequence is RFLGEKVERY…VLRRFYEYLA (78 aa). Residues 104 to 301 enclose the Tyr recombinase domain; sequence PPPRILSEAE…SVDLLAMAAE (198 aa). Catalysis depends on residues arginine 148, lysine 173, histidine 245, arginine 248, and histidine 279. The active-site O-(3'-phospho-DNA)-tyrosine intermediate is tyrosine 288.

It belongs to the 'phage' integrase family.

The chain is Putative integrase/recombinase y4rE from Sinorhizobium fredii (strain NBRC 101917 / NGR234).